The primary structure comprises 98 residues: NADH-ubiquinone oxidoreductase chain 4L (98 aa).

The next 3 helical transmembrane spans lie at 1–21 (MLSI…GVLI), 29–49 (TLLC…LLIT), and 59–79 (TPLI…ALLV).

Belongs to the complex I subunit 4L family. In terms of assembly, core subunit of respiratory chain NADH dehydrogenase (Complex I) which is composed of 45 different subunits.

Its subcellular location is the mitochondrion inner membrane. It carries out the reaction a ubiquinone + NADH + 5 H(+)(in) = a ubiquinol + NAD(+) + 4 H(+)(out). Functionally, core subunit of the mitochondrial membrane respiratory chain NADH dehydrogenase (Complex I) which catalyzes electron transfer from NADH through the respiratory chain, using ubiquinone as an electron acceptor. Part of the enzyme membrane arm which is embedded in the lipid bilayer and involved in proton translocation. This chain is NADH-ubiquinone oxidoreductase chain 4L (MT-ND4L), found in Sminthopsis crassicaudata (Fat-tailed dunnart).